The sequence spans 85 residues: Large ribosomal subunit protein bL27 (85 aa).

Over residues 1–10 (MAQKKGGGST) the composition is skewed to gly residues. A disordered region spans residues 1–21 (MAQKKGGGSTRNGRDSQPKML).

It belongs to the bacterial ribosomal protein bL27 family.

The polypeptide is Large ribosomal subunit protein bL27 (Leptothrix cholodnii (strain ATCC 51168 / LMG 8142 / SP-6) (Leptothrix discophora (strain SP-6))).